The chain runs to 434 residues: Bifunctional protein GlmU (434 aa).

The pyrophosphorylase stretch occupies residues 1–226 (MNKNKISIVI…ENEYKGVNSK (226 aa)). UDP-N-acetyl-alpha-D-glucosamine-binding positions include 11–14 (LAAG), lysine 25, glutamine 77, and 84–85 (GT). Residue aspartate 105 coordinates Mg(2+). UDP-N-acetyl-alpha-D-glucosamine-binding residues include glycine 138, glutamate 152, asparagine 167, and asparagine 224. Residue asparagine 224 coordinates Mg(2+). Residues 227 to 247 (KDLSDAEIIMQDKIKNSLMES) are linker. The N-acetyltransferase stretch occupies residues 248–434 (GVTMQLPSTI…DFYYKFFAKK (187 aa)). Residues arginine 311 and lysine 328 each contribute to the UDP-N-acetyl-alpha-D-glucosamine site. The active-site Proton acceptor is the histidine 339. The UDP-N-acetyl-alpha-D-glucosamine site is built by tyrosine 342 and asparagine 353. Acetyl-CoA contacts are provided by residues alanine 356, 362–363 (NY), serine 381, and alanine 399.

The protein in the N-terminal section; belongs to the N-acetylglucosamine-1-phosphate uridyltransferase family. In the C-terminal section; belongs to the transferase hexapeptide repeat family. As to quaternary structure, homotrimer. Mg(2+) is required as a cofactor.

Its subcellular location is the cytoplasm. The enzyme catalyses alpha-D-glucosamine 1-phosphate + acetyl-CoA = N-acetyl-alpha-D-glucosamine 1-phosphate + CoA + H(+). The catalysed reaction is N-acetyl-alpha-D-glucosamine 1-phosphate + UTP + H(+) = UDP-N-acetyl-alpha-D-glucosamine + diphosphate. Its pathway is nucleotide-sugar biosynthesis; UDP-N-acetyl-alpha-D-glucosamine biosynthesis; N-acetyl-alpha-D-glucosamine 1-phosphate from alpha-D-glucosamine 6-phosphate (route II): step 2/2. It functions in the pathway nucleotide-sugar biosynthesis; UDP-N-acetyl-alpha-D-glucosamine biosynthesis; UDP-N-acetyl-alpha-D-glucosamine from N-acetyl-alpha-D-glucosamine 1-phosphate: step 1/1. It participates in bacterial outer membrane biogenesis; LPS lipid A biosynthesis. Functionally, catalyzes the last two sequential reactions in the de novo biosynthetic pathway for UDP-N-acetylglucosamine (UDP-GlcNAc). The C-terminal domain catalyzes the transfer of acetyl group from acetyl coenzyme A to glucosamine-1-phosphate (GlcN-1-P) to produce N-acetylglucosamine-1-phosphate (GlcNAc-1-P), which is converted into UDP-GlcNAc by the transfer of uridine 5-monophosphate (from uridine 5-triphosphate), a reaction catalyzed by the N-terminal domain. The chain is Bifunctional protein GlmU from Sulfurimonas denitrificans (strain ATCC 33889 / DSM 1251) (Thiomicrospira denitrificans (strain ATCC 33889 / DSM 1251)).